A 492-amino-acid chain; its full sequence is ERAD-associated E3 ubiquitin-protein ligase HRD1A (492 aa).

At 1 to 3 (MIR) the chain is on the cytoplasmic side. The helical transmembrane segment at 4–24 (LRTYAGLSFMATLAVIYHAFS) threads the bilayer. Residues 25 to 40 (SRGQFYPATVYLSTSK) lie on the Lumenal side of the membrane. The helical transmembrane segment at 41–61 (ISLVLLLNMCLVLMLSLWHLV) threads the bilayer. Topologically, residues 62–98 (KFVFLGSLREAEVERLNEQAWRELMEILFAITIFRQD) are cytoplasmic. The chain crosses the membrane as a helical span at residues 99–119 (FSSGFLPLVVTLLLIKALHWL). Over 120–135 (AQKRVEYIETTPSVSK) the chain is Lumenal. A helical membrane pass occupies residues 136–156 (LSHFRIVSFMGFLLLVDSLFM). Topologically, residues 157–170 (YSSIRHLIQSRQAS) are cytoplasmic. A helical membrane pass occupies residues 171 to 191 (VSLFFSFEYMILATTTVAIFV). The Lumenal segment spans residues 192-221 (KYVFYVTDMLMDGQWEKKPVYTFYLELIRD). The helical transmembrane segment at 222-242 (LLHLSMYICFFFVIFMNYGVP) threads the bilayer. Topologically, residues 243 to 492 (LHLLRELYET…KGKSVADAAE (250 aa)) are cytoplasmic. The RING-type; atypical zinc-finger motif lies at 292–330 (CIICREEMTNAKKLICGHLFHVHCLRSWLERQQTCPTCR). Disordered stretches follow at residues 339–379 (ATSA…NSLS) and 470–492 (ETRK…DAAE). The span at 351–378 (QGSQQGTSSSGNQGSEISSSAGVSNNSL) shows a compositional bias: low complexity. Residues 470–486 (ETRKPESAGEPENKGKS) are compositionally biased toward basic and acidic residues.

It belongs to the HRD1 family.

It is found in the endoplasmic reticulum membrane. It catalyses the reaction S-ubiquitinyl-[E2 ubiquitin-conjugating enzyme]-L-cysteine + [acceptor protein]-L-lysine = [E2 ubiquitin-conjugating enzyme]-L-cysteine + N(6)-ubiquitinyl-[acceptor protein]-L-lysine.. Its pathway is protein modification; protein ubiquitination. Functionally, probable component of the HRD1 ubiquitin ligase complex that mediates the rapid degradation of misfolded endoplasmic reticulum (ER) proteins, a process called ER-associated degradation (ERAD). Targets the misfolded LRR receptor kinase BRI1. Functions redundantly with HRD3B. This Arabidopsis thaliana (Mouse-ear cress) protein is ERAD-associated E3 ubiquitin-protein ligase HRD1A.